Consider the following 351-residue polypeptide: Columbamine O-methyltransferase (351 aa).

Positions 198, 221, 241, 242, and 255 each coordinate S-adenosyl-L-methionine. H259 (proton acceptor) is an active-site residue.

The protein belongs to the class I-like SAM-binding methyltransferase superfamily. Cation-independent O-methyltransferase family. COMT subfamily. As to quaternary structure, homodimer.

It catalyses the reaction columbamine + S-adenosyl-L-methionine = palmatine + S-adenosyl-L-homocysteine + H(+). It carries out the reaction (S)-tetrahydrocolumbamine + S-adenosyl-L-methionine = (S)-tetrahydropalmatine + S-adenosyl-L-homocysteine + H(+). Its pathway is alkaloid biosynthesis; palmatine biosynthesis; palmatine from columbamine: step 1/1. Functionally, catalyzes the conversion of tetrahydrocolumbamine to (S)-tetrahydropalmatine and of columbamine to palmatine, an isoquinoline alkaloid. This is Columbamine O-methyltransferase from Coptis japonica (Japanese goldthread).